Here is an 80-residue protein sequence, read N- to C-terminus: Small ribosomal subunit protein uS17 (80 aa).

The protein belongs to the universal ribosomal protein uS17 family. In terms of assembly, part of the 30S ribosomal subunit.

One of the primary rRNA binding proteins, it binds specifically to the 5'-end of 16S ribosomal RNA. The polypeptide is Small ribosomal subunit protein uS17 (Beijerinckia indica subsp. indica (strain ATCC 9039 / DSM 1715 / NCIMB 8712)).